The primary structure comprises 443 residues: Ribosomal protein uS12 methylthiotransferase RimO (443 aa).

One can recognise an MTTase N-terminal domain in the interval 5–115; that stretch reads PNIGFISLGC…VMKHVHKYVP (111 aa). Residues Cys14, Cys50, Cys79, Cys147, Cys151, and Cys154 each contribute to the [4Fe-4S] cluster site. The Radical SAM core domain maps to 133–374; that stretch reads LTPKHYAYLK…MQVQQRISAA (242 aa). Positions 377 to 443 constitute a TRAM domain; the sequence is QQKVGKTLAV…ADEYDLWGTC (67 aa).

This sequence belongs to the methylthiotransferase family. RimO subfamily. The cofactor is [4Fe-4S] cluster.

It localises to the cytoplasm. The catalysed reaction is L-aspartate(89)-[ribosomal protein uS12]-hydrogen + (sulfur carrier)-SH + AH2 + 2 S-adenosyl-L-methionine = 3-methylsulfanyl-L-aspartate(89)-[ribosomal protein uS12]-hydrogen + (sulfur carrier)-H + 5'-deoxyadenosine + L-methionine + A + S-adenosyl-L-homocysteine + 2 H(+). Its function is as follows. Catalyzes the methylthiolation of an aspartic acid residue of ribosomal protein uS12. This Actinobacillus pleuropneumoniae serotype 5b (strain L20) protein is Ribosomal protein uS12 methylthiotransferase RimO.